A 246-amino-acid chain; its full sequence is MKYDIIGDIHGCLQEFQNLTEKLGYNWSSGLPVHPDQRKLAFVGDITDRGPHSLRMIEIVWELVIHKKVAYYAPGNHCNKLYRFFLGRNVTVAHGLETTVAEYEALPSHKQNMIKEKFITLYEQSPLYHVLDEKRLLVCHAGIRQDYIGRQDKKVQTFVLYGDITGEKHADGSPVRRDWAKEYKGTTWIVYGHTPVKEPRFVNHTVNIDTGAVFGGRLTALRYPEMETVSVPSSLPFVPEKFRPIS.

The protein belongs to the PrpE family. The cofactor is Ni(2+).

The enzyme catalyses P(1),P(4)-bis(5'-guanosyl) tetraphosphate + H2O = GMP + GTP + 2 H(+). Its function is as follows. Asymmetrically hydrolyzes Ap4p to yield AMP and ATP. The chain is Bis(5'-nucleosyl)-tetraphosphatase PrpE [asymmetrical] from Bacillus cereus (strain AH820).